Reading from the N-terminus, the 175-residue chain is Crossover junction endodeoxyribonuclease RuvC (175 aa).

Residues aspartate 7, glutamate 68, and aspartate 141 contribute to the active site. Mg(2+)-binding residues include aspartate 7, glutamate 68, and aspartate 141.

It belongs to the RuvC family. In terms of assembly, homodimer which binds Holliday junction (HJ) DNA. The HJ becomes 2-fold symmetrical on binding to RuvC with unstacked arms; it has a different conformation from HJ DNA in complex with RuvA. In the full resolvosome a probable DNA-RuvA(4)-RuvB(12)-RuvC(2) complex forms which resolves the HJ. The cofactor is Mg(2+).

Its subcellular location is the cytoplasm. The enzyme catalyses Endonucleolytic cleavage at a junction such as a reciprocal single-stranded crossover between two homologous DNA duplexes (Holliday junction).. In terms of biological role, the RuvA-RuvB-RuvC complex processes Holliday junction (HJ) DNA during genetic recombination and DNA repair. Endonuclease that resolves HJ intermediates. Cleaves cruciform DNA by making single-stranded nicks across the HJ at symmetrical positions within the homologous arms, yielding a 5'-phosphate and a 3'-hydroxyl group; requires a central core of homology in the junction. The consensus cleavage sequence is 5'-(A/T)TT(C/G)-3'. Cleavage occurs on the 3'-side of the TT dinucleotide at the point of strand exchange. HJ branch migration catalyzed by RuvA-RuvB allows RuvC to scan DNA until it finds its consensus sequence, where it cleaves and resolves the cruciform DNA. This chain is Crossover junction endodeoxyribonuclease RuvC, found in Salinispora arenicola (strain CNS-205).